The chain runs to 247 residues: 14-3-3 protein gamma (247 aa).

The protein belongs to the 14-3-3 family. Homodimer, and heterodimer with other family members.

The protein localises to the cytoplasm. In terms of biological role, adapter protein implicated in the regulation of a large spectrum of both general and specialized signaling pathways. Binds to a large number of partners, usually by recognition of a phosphoserine or phosphothreonine motif. Binding generally results in the modulation of the activity of the binding partner. The polypeptide is 14-3-3 protein gamma (YWHAG) (Gallus gallus (Chicken)).